Consider the following 290-residue polypeptide: MASLKEVKTRINSVQSTRKITSAMKMVASAKLHKAQGAIENMLPYQRKLNKILTNFLSADLPVESPFCVERPVMRVAIVAFSSNSSLCGAFNANVLKMFLQTVGEYRELGQDNILIYPVGKKIEEAVKKLGFFPQGSYQKLADKPSYDEAAALAKLLMELFLEKNIDRVELIYHHFKSMGVQELLRERYLPIDLSAVQNDEERGGVVNDYIIEPSAAQLIADLIPQVLSQKIFTAALDSNASEHAARTLAMQIATDNANELIQELTKQYNKTRQQAITNELLDIVGGSMA.

Belongs to the ATPase gamma chain family. F-type ATPases have 2 components, CF(1) - the catalytic core - and CF(0) - the membrane proton channel. CF(1) has five subunits: alpha(3), beta(3), gamma(1), delta(1), epsilon(1). CF(0) has three main subunits: a, b and c.

The protein resides in the cell inner membrane. Functionally, produces ATP from ADP in the presence of a proton gradient across the membrane. The gamma chain is believed to be important in regulating ATPase activity and the flow of protons through the CF(0) complex. The sequence is that of ATP synthase gamma chain from Bacteroides fragilis (strain YCH46).